A 242-amino-acid chain; its full sequence is Probable pectate lyase D (242 aa).

The N-terminal stretch at 1-17 is a signal peptide; that stretch reads MYQKSLLFSLLASSALA. Asn-216 carries N-linked (GlcNAc...) asparagine glycosylation. Residues 217–242 are disordered; it reads DTGAEPEEISEGPSDACQYSEPLSSC.

It belongs to the polysaccharide lyase 3 family. The cofactor is Ca(2+).

The protein localises to the secreted. It carries out the reaction Eliminative cleavage of (1-&gt;4)-alpha-D-galacturonan to give oligosaccharides with 4-deoxy-alpha-D-galact-4-enuronosyl groups at their non-reducing ends.. Its function is as follows. Pectinolytic enzyme consist of four classes of enzymes: pectin lyase, polygalacturonase, pectin methylesterase and rhamnogalacturonase. Among pectinolytic enzymes, pectin lyase is the most important in depolymerization of pectin, since it cleaves internal glycosidic bonds of highly methylated pectins. Favors pectate, the anion, over pectin, the methyl ester. This is Probable pectate lyase D (plyD) from Aspergillus fumigatus (strain CBS 144.89 / FGSC A1163 / CEA10) (Neosartorya fumigata).